Here is a 157-residue protein sequence, read N- to C-terminus: Small ribosomal subunit protein uS7 (157 aa).

It belongs to the universal ribosomal protein uS7 family. As to quaternary structure, part of the 30S ribosomal subunit. Contacts proteins S9 and S11.

One of the primary rRNA binding proteins, it binds directly to 16S rRNA where it nucleates assembly of the head domain of the 30S subunit. Is located at the subunit interface close to the decoding center, probably blocks exit of the E-site tRNA. This is Small ribosomal subunit protein uS7 from Paracidovorax citrulli (strain AAC00-1) (Acidovorax citrulli).